Consider the following 282-residue polypeptide: MFSFIMKAAILLILVGCISFCISSEPLNESEITFEREERSLADPAGRQKRQSGLSCPKRISHSPEYPRDCYDILQSCSGQSPPSGQYYIQPDGGNLIKVYCDMETDEGGWTVFQRRIDGTINFYRSWSYYQTGFGNLNTEFWLGNDNIHYLTSQGDYELRVELNNTLGNHYYAKYNKFRIGDSFSEYLLVLGAYSGTAGDSLAYHNTMRFSTYDNDNDVYSINCASHSSYGRGAWWYKSCLLSNLNGQYYDYSGAPSIYWSYLPGDNDQIPFAEMKLRNRSI.

The signal sequence occupies residues 1–24 (MFSFIMKAAILLILVGCISFCISS). Residues 61 to 281 (SHSPEYPRDC…FAEMKLRNRS (221 aa)) form the Fibrinogen C-terminal domain. Cystine bridges form between Cys-70–Cys-101 and Cys-224–Cys-240.

The protein is Fibrinogen-like protein A of Apostichopus parvimensis (Warty sea cucumber).